An 870-amino-acid polypeptide reads, in one-letter code: Lysosomal cholesterol signaling protein (870 aa).

At 1–38 (MNSNLPAENLTIAVNMTKTLPTAVTHGFNSTNDPPSMS) the chain is on the lumenal side. Positions 1-370 (MNSNLPAENL…SAWLLTFPTM (370 aa)) are PIN-like transporter. Asparagine 9, asparagine 15, and asparagine 29 each carry an N-linked (GlcNAc...) asparagine glycan. Residues 39 to 59 (ITRLFPALLECFGIVLCGYIA) traverse the membrane as a helical segment. Positions 43 and 57 each coordinate cholesterol. Residues 60 to 79 (GRANVITSTQAKGLGNFVSR) lie on the Cytoplasmic side of the membrane. The helical transmembrane segment at 80-100 (FALPALLFKNMVVLNFSNVDW) threads the bilayer. At 101-104 (SFLY) the chain is on the lumenal side. The chain crosses the membrane as a helical span at residues 105 to 125 (SILIAKASVFFIVCVLTLLVA). Over 126–133 (SPDSRFSK) the chain is Cytoplasmic. A discontinuously helical transmembrane segment spans residues 134–154 (AGLFPIFATQSNDFALGYPIV). Over 155-167 (EALYQTTYPEYLQ) the chain is Lumenal. Residues 168 to 188 (YIYLVAPISLMMLNPIGFIFC) traverse the membrane as a helical segment. Residues 189–213 (EIQKWKDTQNASQNKIKIVGLGLLR) are Cytoplasmic-facing. The discontinuously helical transmembrane segment at 214 to 234 (VLQNPIVFMVFIGIAFNFILD) threads the bilayer. The Lumenal portion of the chain corresponds to 235–243 (RKVPVYVEN). The chain crosses the membrane as a discontinuously helical span at residues 244–264 (FLDGLGNSFSGSALFYLGLTM). The Cytoplasmic portion of the chain corresponds to 265-273 (VGKIKRLKK). The cholesterol site is built by glycine 266, lysine 267, and isoleucine 268. Residues 274-294 (SAFVVLILLITAKLLVLPLLC) traverse the membrane as a helical segment. Topologically, residues 295–315 (REMVELLDKGDSVVNHTSLSN) are lumenal. A glycan (N-linked (GlcNAc...) asparagine) is linked at asparagine 309. A discontinuously helical membrane pass occupies residues 316–336 (YAFLYGVFPVAPGVAIFATQF). At 337–346 (NMEVEIITSG) the chain is on the cytoplasmic side. The chain crosses the membrane as a helical span at residues 347–367 (MVISTFVSAPIMYVSAWLLTF). The Lumenal portion of the chain corresponds to 368 to 381 (PTMDPKPLAYAIQN). The interval 380-717 (QNVSFDISIV…FGIFGLDKHL (338 aa)) is GPCR. Asparagine 381 is a glycosylation site (N-linked (GlcNAc...) asparagine). A helical transmembrane segment spans residues 382–402 (VSFDISIVSLISLIWSLAILL). Topologically, residues 403 to 414 (LSKKYKQLPHML) are cytoplasmic. A helical transmembrane segment spans residues 415–435 (TTNLLIAQSIVCAGMMIWNFV). Topologically, residues 436 to 438 (KEK) are lumenal. The helical transmembrane segment at 439-459 (NFVGQILVFVLLYSSLYSTYL) threads the bilayer. The Cytoplasmic segment spans residues 460-480 (WTGLLAISLFLLKKRERVQIP). The helical transmembrane segment at 481-501 (VGIIIISGWGIPALLVGVLLI) threads the bilayer. The Lumenal segment spans residues 502-520 (TGKHNGDSIDSAFFYGKEQ). The chain crosses the membrane as a helical span at residues 521 to 541 (MITTAVTLFCSILIAGISLMC). At 542–660 (MNQTAQAGSY…GDQQLTRHVL (119 aa)) the chain is on the cytoplasmic side. Cholesterol is bound at residue arginine 657. Residues 661–681 (LCLLLIIGLFANLSSCLWWLF) form a helical membrane-spanning segment. Topologically, residues 682 to 691 (NQEPGRLYVE) are lumenal. A helical membrane pass occupies residues 692 to 712 (LQFFCAVFNFGQGFISFGIFG). Over 713–870 (LDKHLIILPF…SSPPSHSPKT (158 aa)) the chain is Cytoplasmic. The DEP domain occupies 757–835 (YHRDLCIRNI…DEYLFYRFLQ (79 aa)).

Homodimer; via the transporter region and DEP domain. Interacts with the GATOR1 complex and prevents interaction between GATOR1 and KICSTOR; this interaction is disrupted upon cholesterol starvation.

The protein resides in the lysosome membrane. In terms of biological role, cholesterol-binding protein that acts as a regulator of mTORC1 signaling pathway. Acts as a sensor of cholesterol to signal cholesterol sufficiency to mTORC1: in presence of cholesterol, binds cholesterol, leading to disruption of the interaction between the GATOR1 and KICSTOR complexes and promotion of mTORC1 signaling. Upon cholesterol starvation, GPR155/LYCHOS is unable to perturb the association between GATOR1 and KICSTOR, leading to mTORC1 signaling inhibition. Binds indole-3-acetic acid and may play a role in tryptophan metabolism. The protein is Lysosomal cholesterol signaling protein of Homo sapiens (Human).